The sequence spans 102 residues: Small ribosomal subunit protein uS10 (102 aa).

This sequence belongs to the universal ribosomal protein uS10 family. Part of the 30S ribosomal subunit.

Functionally, involved in the binding of tRNA to the ribosomes. The protein is Small ribosomal subunit protein uS10 of Acidothermus cellulolyticus (strain ATCC 43068 / DSM 8971 / 11B).